Here is a 133-residue protein sequence, read N- to C-terminus: Small ribosomal subunit protein uS8 (133 aa).

The disordered stretch occupies residues 1-28 (MANHDPISDMLTRIRNASEKRHEKTKVP). Residues 16–26 (NASEKRHEKTK) show a composition bias toward basic and acidic residues.

It belongs to the universal ribosomal protein uS8 family. As to quaternary structure, part of the 30S ribosomal subunit. Contacts proteins S5 and S12.

Functionally, one of the primary rRNA binding proteins, it binds directly to 16S rRNA central domain where it helps coordinate assembly of the platform of the 30S subunit. In Prochlorococcus marinus (strain NATL1A), this protein is Small ribosomal subunit protein uS8.